The chain runs to 646 residues: MATESGSDSQLRRRRRRDPEGSEKTELSEREPALAVAGSEENDDENEERWVGPLPVEATLAKKRKVLEFERVYLDNLPSASMYERSYMHRDVITHVVCTKTDFIITASHDGHVKFWKKIEEGIEFVKHFRSHLGVIESIAVSSEGALFCSVGDDKAMKVFDVVNFDMINMLKLGYFPGQCEWIYCPGDAISSVAASEKSTGKIFIYDGRGDNQPLHIFDKLHVSPLTQIRLNPVYKAVVSSDKSGMIEYWTGPPHEYKFPKNVNWEYKTDTDLYEFAKCKAYPTSICFSPDGKKIATIGSDRKVRIFRFLTGKLMRVFDESLSMFTELQQMRQQLPDMEFGRRMAVERELEKVDAVRLVNIVFDETGHFVLYGTMLGIKVINVETNRCVRILGKQENIRVMQLALFQGIAKKHRAAATIEMKASENPVLQNIQADPTIVCTSFKKNRFYMFTKREPEDTKTADSDRDVFNEKPSKEEVMAATQAEGPKRVSDSAIVHTSMGDIHIKLFPVECPKTVENFCVHSRNGYYNGHTFHRIIKGFMIQTGDPTGTGMGGESIWGGEFEDEFHSTLRHDRPYTLSMANAGSNTNGSQFFITVVPTPWLDNKHTVFGRVTKGMEVVQRISNVKVNPKTDKPYEDVSIINITVK.

Positions 1-50 (MATESGSDSQLRRRRRRDPEGSEKTELSEREPALAVAGSEENDDENEERW) are disordered. At Ala-2 the chain carries N-acetylalanine. Residues 17 to 32 (RDPEGSEKTELSEREP) are compositionally biased toward basic and acidic residues. WD repeat units follow at residues 88-126 (MHRD…IEFV), 131-170 (SHLG…MINM), 221-260 (LHVS…YKFP), and 278-319 (KCKA…RVFD). Residues 490-645 (VSDSAIVHTS…EDVSIINITV (156 aa)) enclose the PPIase cyclophilin-type domain.

The protein belongs to the cyclophilin-type PPIase family. PPIL1 subfamily. Identified in the spliceosome C complex.

It is found in the nucleus. It catalyses the reaction [protein]-peptidylproline (omega=180) = [protein]-peptidylproline (omega=0). With respect to regulation, inhibited by cyclosporin A (CsA). In terms of biological role, PPIase that catalyzes the cis-trans isomerization of proline imidic peptide bonds in oligopeptides and may therefore assist protein folding. May be involved in pre-mRNA splicing. The sequence is that of Peptidylprolyl isomerase domain and WD repeat-containing protein 1 from Mus musculus (Mouse).